The chain runs to 206 residues: Octanoyltransferase (206 aa).

A BPL/LPL catalytic domain is found at 30-206; it reads PETNDEIWLV…EFVTLLNNSI (177 aa). Residues 69-76, 137-139, and 150-152 contribute to the substrate site; these read RGGQVTYH, SLG, and GIA. The active-site Acyl-thioester intermediate is the Cys-168.

This sequence belongs to the LipB family.

The protein localises to the cytoplasm. It catalyses the reaction octanoyl-[ACP] + L-lysyl-[protein] = N(6)-octanoyl-L-lysyl-[protein] + holo-[ACP] + H(+). Its pathway is protein modification; protein lipoylation via endogenous pathway; protein N(6)-(lipoyl)lysine from octanoyl-[acyl-carrier-protein]: step 1/2. Its function is as follows. Catalyzes the transfer of endogenously produced octanoic acid from octanoyl-acyl-carrier-protein onto the lipoyl domains of lipoate-dependent enzymes. Lipoyl-ACP can also act as a substrate although octanoyl-ACP is likely to be the physiological substrate. The chain is Octanoyltransferase from Francisella tularensis subsp. novicida (strain U112).